Consider the following 428-residue polypeptide: Trigger factor (428 aa).

Residues 165-240 enclose the PPIase FKBP-type domain; it reads ADLIKLDAEG…VKEVKRMELP (76 aa).

It belongs to the FKBP-type PPIase family. Tig subfamily.

It is found in the cytoplasm. It catalyses the reaction [protein]-peptidylproline (omega=180) = [protein]-peptidylproline (omega=0). In terms of biological role, involved in protein export. Acts as a chaperone by maintaining the newly synthesized protein in an open conformation. Functions as a peptidyl-prolyl cis-trans isomerase. This is Trigger factor from Prosthecochloris aestuarii (strain DSM 271 / SK 413).